We begin with the raw amino-acid sequence, 518 residues long: Integrator complex subunit 14 (518 aa).

In terms of domain architecture, VWFA spans 2–204 (PTVVVMDVSL…KNVQSMFGKL (203 aa)). Residues Ser-10, Ser-12, and Thr-86 each contribute to the Mg(2+) site. Position 418 is an N6-acetyllysine (Lys-418).

Belongs to the Integrator subunit 14 family. Component of the Integrator complex, composed of core subunits INTS1, INTS2, INTS3, INTS4, INTS5, INTS6, INTS7, INTS8, INTS9/RC74, INTS10, INTS11/CPSF3L, INTS12, INTS13, INTS14 and INTS15. The core complex associates with protein phosphatase 2A subunits PPP2CA and PPP2R1A, to form the Integrator-PP2A (INTAC) complex. INTS14 is part of the tail subcomplex, composed of INTS10, INTS13, INTS14 and INTS15.

The protein resides in the nucleus. In terms of biological role, component of the integrator complex, a multiprotein complex that terminates RNA polymerase II (Pol II) transcription in the promoter-proximal region of genes. The integrator complex provides a quality checkpoint during transcription elongation by driving premature transcription termination of transcripts that are unfavorably configured for transcriptional elongation: the complex terminates transcription by (1) catalyzing dephosphorylation of the C-terminal domain (CTD) of Pol II subunit POLR2A/RPB1 and SUPT5H/SPT5, (2) degrading the exiting nascent RNA transcript via endonuclease activity and (3) promoting the release of Pol II from bound DNA. The integrator complex is also involved in terminating the synthesis of non-coding Pol II transcripts, such as enhancer RNAs (eRNAs), small nuclear RNAs (snRNAs), telomerase RNAs and long non-coding RNAs (lncRNAs). Within the integrator complex, INTS14 is part of the integrator tail module that acts as a platform for the recruitment of transcription factors at promoters. The chain is Integrator complex subunit 14 from Bos taurus (Bovine).